Here is a 207-residue protein sequence, read N- to C-terminus: Large ribosomal subunit protein uL4 (207 aa).

The segment at 44–71 (RRQGTQSAKTRAEVRGGGRKPWKQKGTG) is disordered. Positions 60–71 (GGRKPWKQKGTG) are enriched in basic residues.

The protein belongs to the universal ribosomal protein uL4 family. Part of the 50S ribosomal subunit.

One of the primary rRNA binding proteins, this protein initially binds near the 5'-end of the 23S rRNA. It is important during the early stages of 50S assembly. It makes multiple contacts with different domains of the 23S rRNA in the assembled 50S subunit and ribosome. In terms of biological role, forms part of the polypeptide exit tunnel. The sequence is that of Large ribosomal subunit protein uL4 from Alkaliphilus oremlandii (strain OhILAs) (Clostridium oremlandii (strain OhILAs)).